The chain runs to 247 residues: Chymase (247 aa).

Residues 1-17 (MCLLSLPLLLFLQYTRA) form the signal peptide. Residues 18-21 (KAGE) constitute a propeptide, activation peptide. The region spanning 22-245 (VIGGTECKPH…YRPWINKILK (224 aa)) is the Peptidase S1 domain. Residues Cys-51 and Cys-67 are joined by a disulfide bond. His-66 functions as the Charge relay system in the catalytic mechanism. A glycan (N-linked (GlcNAc...) asparagine) is linked at Asn-103. The active-site Charge relay system is Asp-110. Asn-121 is a glycosylation site (N-linked (GlcNAc...) asparagine). 2 disulfides stabilise this stretch: Cys-144-Cys-209 and Cys-175-Cys-188. Ser-203 serves as the catalytic Charge relay system.

It belongs to the peptidase S1 family. Granzyme subfamily.

It localises to the secreted. The protein resides in the cytoplasmic granule. The catalysed reaction is Preferential cleavage: Phe-|-Xaa &gt; Tyr-|-Xaa &gt; Trp-|-Xaa &gt; Leu-|-Xaa.. Major secreted protease of mast cells with suspected roles in vasoactive peptide generation, extracellular matrix degradation, and regulation of gland secretion. In Cavia porcellus (Guinea pig), this protein is Chymase.